Reading from the N-terminus, the 172-residue chain is Putative metal-dependent hydrolase OB0782 (172 aa).

Positions 64, 155, and 159 each coordinate Zn(2+).

Belongs to the metal hydrolase YfiT family. As to quaternary structure, homodimer. Requires Zn(2+) as cofactor.

The protein localises to the cytoplasm. Functionally, possible metal-dependent hydrolase. This Oceanobacillus iheyensis (strain DSM 14371 / CIP 107618 / JCM 11309 / KCTC 3954 / HTE831) protein is Putative metal-dependent hydrolase OB0782.